The following is a 249-amino-acid chain: Exosome complex component Rrp41 (249 aa).

This sequence belongs to the RNase PH family. Rrp41 subfamily. Component of the archaeal exosome complex. Forms a hexameric ring-like arrangement composed of 3 Rrp41-Rrp42 heterodimers. The hexameric ring associates with a trimer of Rrp4 and/or Csl4 subunits.

It is found in the cytoplasm. In terms of biological role, catalytic component of the exosome, which is a complex involved in RNA degradation. Has 3'-&gt;5' exoribonuclease activity. Can also synthesize heteromeric RNA-tails. The sequence is that of Exosome complex component Rrp41 from Thermococcus kodakarensis (strain ATCC BAA-918 / JCM 12380 / KOD1) (Pyrococcus kodakaraensis (strain KOD1)).